A 397-amino-acid chain; its full sequence is Tryptophan synthase beta chain (397 aa).

An N6-(pyridoxal phosphate)lysine modification is found at K91.

Belongs to the TrpB family. In terms of assembly, tetramer of two alpha and two beta chains. Pyridoxal 5'-phosphate serves as cofactor.

It carries out the reaction (1S,2R)-1-C-(indol-3-yl)glycerol 3-phosphate + L-serine = D-glyceraldehyde 3-phosphate + L-tryptophan + H2O. It functions in the pathway amino-acid biosynthesis; L-tryptophan biosynthesis; L-tryptophan from chorismate: step 5/5. The beta subunit is responsible for the synthesis of L-tryptophan from indole and L-serine. This Bacillus cereus (strain AH187) protein is Tryptophan synthase beta chain.